Consider the following 748-residue polypeptide: Meprin A subunit alpha (748 aa).

The signal sequence occupies residues Met1–Ala20. Positions Val21–Arg66 are excised as a propeptide. A Peptidase M12A domain is found at Asn67–Thr261. Residues Asn67 to Ser719 lie on the Extracellular side of the membrane. 3 cysteine pairs are disulfide-bonded: Cys108-Cys260, Cys129-Cys148, and Cys270-Cys432. Asn141 is a glycosylation site (N-linked (GlcNAc...) asparagine). His156 is a binding site for Zn(2+). Glu157 is an active-site residue. 2 residues coordinate Zn(2+): His160 and His166. N-linked (GlcNAc...) asparagine glycosylation is found at Asn223, Asn259, Asn319, Asn441, and Asn542. In terms of domain architecture, MAM spans Thr265 to Thr434. The region spanning Gly435 to Phe596 is the MATH domain. The interval Leu641–Trp668 is disordered. The region spanning Phe672–Gln712 is the EGF-like domain. 3 cysteine pairs are disulfide-bonded: Cys676–Cys687, Cys681–Cys696, and Cys698–Cys711. A helical membrane pass occupies residues Leu720–Phe739. At Ser740–Gln748 the chain is on the cytoplasmic side.

Homotetramer consisting of disulfide-linked alpha subunits, homooligomer consisting of disulfide-linked alpha subunit homodimers, or heterotetramer of two alpha and two beta subunits formed by non-covalent association of two disulfide-linked heterodimers. Interacts with MBL2 through its carbohydrate moiety. This interaction may inhibit its catalytic activity. It depends on Zn(2+) as a cofactor. In terms of processing, N-glycosylated; contains GlcNAc, galactose, mannose and a small amount of fucose. In terms of tissue distribution, colocalized with E-24.11 in proximal tubules of juxtamedullary nephrons.

The protein localises to the membrane. It catalyses the reaction Hydrolysis of protein and peptide substrates preferentially on carboxyl side of hydrophobic residues.. Its activity is regulated as follows. Inhibited by actinonin. This is Meprin A subunit alpha (Mep1a) from Rattus norvegicus (Rat).